Consider the following 491-residue polypeptide: Cysteine--tRNA ligase (491 aa).

Cys31 is a binding site for Zn(2+). Residues 33 to 43 (PTVYGDAHLGH) carry the 'HIGH' region motif. Zn(2+)-binding residues include Cys226, His251, and Glu255. The 'KMSKS' region motif lies at 283 to 287 (KMGKS). Lys286 contributes to the ATP binding site.

This sequence belongs to the class-I aminoacyl-tRNA synthetase family. Monomer. Requires Zn(2+) as cofactor.

The protein resides in the cytoplasm. It catalyses the reaction tRNA(Cys) + L-cysteine + ATP = L-cysteinyl-tRNA(Cys) + AMP + diphosphate. This Bacteroides fragilis (strain ATCC 25285 / DSM 2151 / CCUG 4856 / JCM 11019 / LMG 10263 / NCTC 9343 / Onslow / VPI 2553 / EN-2) protein is Cysteine--tRNA ligase.